The chain runs to 170 residues: Ubiquitin-conjugating enzyme E2 2 (170 aa).

Residues 4-150 form the UBC core domain; the sequence is PARRRLMRDF…VKETVEKSWE (147 aa). Cys-88 (glycyl thioester intermediate) is an active-site residue. Residues 148–170 are disordered; sequence SWEDDLKDMDDGDDDDDDDDDDD. Residues 152–170 are compositionally biased toward acidic residues; the sequence is DLKDMDDGDDDDDDDDDDD.

It belongs to the ubiquitin-conjugating enzyme family.

It is found in the cytoplasm. The protein resides in the nucleus. The catalysed reaction is S-ubiquitinyl-[E1 ubiquitin-activating enzyme]-L-cysteine + [E2 ubiquitin-conjugating enzyme]-L-cysteine = [E1 ubiquitin-activating enzyme]-L-cysteine + S-ubiquitinyl-[E2 ubiquitin-conjugating enzyme]-L-cysteine.. It functions in the pathway protein modification; protein ubiquitination. Its function is as follows. Catalyzes the covalent attachment of ubiquitin to other proteins. Plays a role in transcription regulation by catalyzing the monoubiquitination of histone H2B to form H2BK123ub1. H2BK123ub1 gives a specific tag for epigenetic transcriptional activation and is also a prerequisite for H3K4me and H3K79me formation. Also involved in postreplication repair of UV-damaged DNA, in N-end rule-dependent protein degradation and in sporulation. This is Ubiquitin-conjugating enzyme E2 2 (UBC2) from Eremothecium gossypii (strain ATCC 10895 / CBS 109.51 / FGSC 9923 / NRRL Y-1056) (Yeast).